A 367-amino-acid chain; its full sequence is uncharacterized protein (367 aa).

This is an uncharacterized protein from Arabidopsis thaliana (Mouse-ear cress).